We begin with the raw amino-acid sequence, 556 residues long: MPVVSFSRREMERLWRSLSEEELTDLLDFTKMNLESFGEEVGFEVTSDRMDLVTLEGIVRCLKGISNEELGLPKYRVRRKAFEVRVGEGVAKVRPYVVAALVRDVDLRTEESLVALIEAQEKIHDTLGRKRRRVAIGLHDFSKVKPPIIYDARRAEEVHFVPLGEYAEMSAKEILEQTEKGKIYSHLIANPENLVPLIMDSREEVLSMPPIINSELTRLTPGVRDIFIDVTGTDLKAIWYALEIISSALAERGGEISTLDILYPDGRNIETPRHEPEEMEVDLDFIRSILGLNLSEDDVVMQLLRARLDAECSDGKVRVLIPGYRSDFLHPIDVAEEVSITLGLNKIGYELPKNVMTVGRPHPVEKVSRKVRTVMIGLGYQEVLNYIMTSRASLFHAVGREEREVVEISNPVSESYSVLRDALFPGLLAFLANNTHVRYPQKVFEIGDVVLIDERLENKTRDERRVAAAYADDSVGFEDIYSHLKVLFENLSYRIELEPRKERPFIEGRCASVLREGEEVGVIGEIDPEVLLNLGITVPVAIFEVALKVPGKEPLT.

Residues 274–349 enclose the B5 domain; the sequence is HEPEEMEVDL…ITLGLNKIGY (76 aa). Positions 327, 333, 336, and 337 each coordinate Mg(2+).

This sequence belongs to the phenylalanyl-tRNA synthetase beta subunit family. Type 2 subfamily. Tetramer of two alpha and two beta subunits. The cofactor is Mg(2+).

It is found in the cytoplasm. The catalysed reaction is tRNA(Phe) + L-phenylalanine + ATP = L-phenylalanyl-tRNA(Phe) + AMP + diphosphate + H(+). In Korarchaeum cryptofilum (strain OPF8), this protein is Phenylalanine--tRNA ligase beta subunit.